The primary structure comprises 185 residues: Ribosome-recycling factor (185 aa).

The protein belongs to the RRF family.

It localises to the cytoplasm. Its function is as follows. Responsible for the release of ribosomes from messenger RNA at the termination of protein biosynthesis. May increase the efficiency of translation by recycling ribosomes from one round of translation to another. This is Ribosome-recycling factor from Streptococcus thermophilus (strain CNRZ 1066).